The following is a 184-amino-acid chain: Photosystem I assembly protein Ycf4 (184 aa).

The next 2 membrane-spanning stretches (helical) occupy residues 22–42 (FCWA…GISS) and 57–77 (ILFF…LFIS).

It belongs to the Ycf4 family.

Its subcellular location is the plastid. It is found in the chloroplast thylakoid membrane. Functionally, seems to be required for the assembly of the photosystem I complex. The protein is Photosystem I assembly protein Ycf4 of Populus trichocarpa (Western balsam poplar).